We begin with the raw amino-acid sequence, 357 residues long: NmrA-like family domain-containing oxidoreductase notA' (357 aa).

NADP(+) is bound by residues 13–18, 39–43, 60–61, 81–83, K140, and 164–167; these read GATGAQ, RKPES, DG, TNS, and YMDV.

This sequence belongs to the NmrA-type oxidoreductase family.

Functionally, nmrA-like family domain-containing oxidoreductase; part of the gene cluster that mediates the biosynthesis of notoamide, a fungal indole alkaloid that belongs to a family of natural products containing a characteristic bicyclo[2.2.2]diazaoctane core. The first step of notoamide biosynthesis involves coupling of L-proline and L-tryptophan by the bimodular NRPS notE', to produce cyclo-L-tryptophan-L-proline called brevianamide F. The reverse prenyltransferase notF' then acts as a deoxybrevianamide E synthase and converts brevianamide F to deoxybrevianamide E via reverse prenylation at C-2 of the indole ring leading to the bicyclo[2.2.2]diazaoctane core. Deoxybrevianamide E is further hydroxylated at C-6 of the indole ring, likely catalyzed by the cytochrome P450 monooxygenase notG', to yield 6-hydroxy-deoxybrevianamide E. 6-hydroxy-deoxybrevianamide E is a specific substrate of the prenyltransferase notC' for normal prenylation at C-7 to produce 6-hydroxy-7-prenyl-deoxybrevianamide, also called notoamide S. As the proposed pivotal branching point in notoamide biosynthesis, notoamide S can be diverted to notoamide E through an oxidative pyran ring closure putatively catalyzed by either notH' cytochrome P450 monooxygenase or the notD' FAD-linked oxidoreductase. This step would be followed by an indole 2,3-epoxidation-initiated pinacol-like rearrangement catalyzed by the notB' FAD-dependent monooxygenase leading to the formation of notoamide C and notoamide D. On the other hand notoamide S is converted to notoamide T by notH' (or notD'), a bifunctional oxidase that also functions as the intramolecular Diels-Alderase responsible for generation of (-)-notoamide T. To generate antipodal (+)-notoaminide T, notH (or notD) in Aspergillus strain MF297-2 is expected to catalyze a Diels-Alder reaction leading to the opposite stereochemistry. The remaining oxidoreductase notD' (or notH') likely catalyzes the oxidative pyran ring formation to yield (-)-stephacidin A. The FAD-dependent monooxygenase notI' is highly similar to notB' and is predicted to catalyze a similar conversion from (-)-stephacidin A to (+)-notoamide B via the 2,3-epoxidation of (-)-stephacidin A followed by a pinacol-type rearrangement. Finally, it remains unclear which enzyme could be responsible for the final hydroxylation steps leading to notoamide A and sclerotiamide. The protein is NmrA-like family domain-containing oxidoreductase notA' of Aspergillus versicolor.